The primary structure comprises 414 residues: Serine/threonine transporter SstT (414 aa).

A run of 8 helical transmembrane segments spans residues 16–36, 46–66, 84–104, 143–163, 180–200, 219–239, 300–320, and 332–352; these read GSLV…AWIS, LGTL…LMLV, ILFL…VFSF, ALLN…GFAL, AVTF…FGLV, LVVL…LLVF, MAGA…TLGV, and VVAS…LLLI.

This sequence belongs to the dicarboxylate/amino acid:cation symporter (DAACS) (TC 2.A.23) family.

It is found in the cell inner membrane. It catalyses the reaction L-serine(in) + Na(+)(in) = L-serine(out) + Na(+)(out). The catalysed reaction is L-threonine(in) + Na(+)(in) = L-threonine(out) + Na(+)(out). Its function is as follows. Involved in the import of serine and threonine into the cell, with the concomitant import of sodium (symport system). The protein is Serine/threonine transporter SstT of Salmonella newport (strain SL254).